A 131-amino-acid chain; its full sequence is Small ribosomal subunit protein uS8 (131 aa).

The protein belongs to the universal ribosomal protein uS8 family. In terms of assembly, part of the 30S ribosomal subunit. Contacts proteins S5 and S12.

In terms of biological role, one of the primary rRNA binding proteins, it binds directly to 16S rRNA central domain where it helps coordinate assembly of the platform of the 30S subunit. In Acidovorax sp. (strain JS42), this protein is Small ribosomal subunit protein uS8.